The sequence spans 494 residues: Rho GTPase-activating protein 19 (494 aa).

A2 bears the N-acetylalanine mark. Residues S7 and S31 each carry the phosphoserine modification. One can recognise a Rho-GAP domain in the interval M102 to F308. Disordered stretches follow at residues K349 to H368 and Q399 to R421. Basic and acidic residues predominate over residues N354–H368. Polar residues predominate over residues Q399–Q415. A phosphoserine mark is found at S422, S438, and S470. Phosphothreonine is present on T478.

In terms of tissue distribution, strong expression in fetal heart, brain, placenta, lung, liver, skeletal muscle, kidney and pancreas. Weak expression in adult pancreas, spleen, thymus, and ovary.

Its subcellular location is the nucleus. Its function is as follows. GTPase activator for the Rho-type GTPases by converting them to an inactive GDP-bound state. The protein is Rho GTPase-activating protein 19 (ARHGAP19) of Homo sapiens (Human).